A 336-amino-acid polypeptide reads, in one-letter code: MKTRHLVYLAFALLGLGLAGLLEDWGLLPQSPSLLSLNRLYLALAGLLTGLLLGPRLEGALEARLKRLRSLPPEVVVATTLGSTIGLLLAVLLTTLLAQVPGFSPVHSLLLALGLVALFVYLALGYRAYFRLPEPKPAPRGGKVLDTSVLVDGRVAEVAAVGFLEGPLWVPHFVLKELQHFADSQDPLRRAKGRRGLETLERLREAAPLEVLETTPKGESVDEKLLFLARDLEAALVTNDHALLQMARIYGVKALSIQALAQALRPQLQVGDTLKLLILKEGKEPHQGVGYLEDGSMVVVDGGSRYRGQEIEVVVTQAIQTQVGRLFFARPAQGAQ.

Positions 1–23 (MKTRHLVYLAFALLGLGLAGLLE) are cleaved as a signal peptide. 3 helical membrane passes run 34 to 54 (LLSLNRLYLALAGLLTGLLLG), 75 to 95 (VVVATTLGSTIGLLLAVLLTT), and 106 to 126 (VHSLLLALGLVALFVYLALGY). A PINc domain is found at 144–255 (VLDTSVLVDG…MARIYGVKAL (112 aa)). Residue Asp222 coordinates Mg(2+). The TRAM domain maps to 267–328 (QLQVGDTLKL…IQTQVGRLFF (62 aa)).

The protein belongs to the PINc/VapC protein family. Mg(2+) serves as cofactor.

The protein localises to the membrane. In terms of biological role, part of a toxin-antitoxin (TA) system. An RNase. This is an uncharacterized protein from Thermus thermophilus (strain ATCC 27634 / DSM 579 / HB8).